We begin with the raw amino-acid sequence, 170 residues long: Protein SOB FIVE-LIKE 5 (170 aa).

The SOFL-A signature appears at Ser-10–Tyr-15. A disordered region spans residues Asp-17 to Ser-78. Positions Asp-35–Trp-44 are enriched in basic and acidic residues. The SOFL-B signature appears at Ser-61–Pro-70. Residues Val-79–Gly-86 carry the Nuclear localization signal motif.

This sequence belongs to the SOFL plant protein family. In terms of tissue distribution, expressed in seedlings, roots, flowers and siliques. Barely detectable in leaves.

It is found in the cytoplasm. It localises to the nucleus. In terms of biological role, involved in cytokinin-mediated development. This chain is Protein SOB FIVE-LIKE 5, found in Arabidopsis thaliana (Mouse-ear cress).